A 377-amino-acid polypeptide reads, in one-letter code: Probable multidrug ABC transporter permease YbhS (377 aa).

The Cytoplasmic portion of the chain corresponds to 1–28 (MSNPILSWRRVRALCVKETRQIVRDPSS). The helical transmembrane segment at 29–49 (WLIAVVIPLLLLFIFGYGINL) threads the bilayer. The Periplasmic segment spans residues 50–181 (DSSKLRVGIL…WFNPAAISQH (132 aa)). The 231-residue stretch at 145 to 375 (IWQIWQMQRA…GLTWLKTKRR (231 aa)) folds into the ABC transmembrane type-2 domain. A helical transmembrane segment spans residues 182–202 (FIIPGAVTIIMTVIGAILTSL). Residues 203 to 234 (VVAREWERGTMEALLSTEITRTELLLCKLIPY) are Cytoplasmic-facing. Residues 235–255 (YFLGMLAMLLCMLVSVFILGV) form a helical membrane-spanning segment. The Periplasmic segment spans residues 256-261 (PYRGSL). The helical transmembrane segment at 262–282 (LILFFISSLFLLSTLGMGLLI) threads the bilayer. Over 283–291 (STITRNQFN) the chain is Cytoplasmic. Residues 292-312 (AAQVALNAAFLPSIMLSGFIF) form a helical membrane-spanning segment. At 313–345 (QIDSMPAVIRAVTYIIPARYFVSTLQSLFLAGN) the chain is on the periplasmic side. A helical transmembrane segment spans residues 346-366 (IPVVLVVNVLFLIASAVMFIG). The Cytoplasmic portion of the chain corresponds to 367–377 (LTWLKTKRRLD).

The protein belongs to the ABC-2 integral membrane protein family. The complex is probably composed of two ATP-binding proteins (YbhF) and two transmembrane proteins (YbhR and YbhS).

Its subcellular location is the cell inner membrane. Its function is as follows. Part of the ABC transporter complex YbhFSR that could be involved in efflux of cefoperazone. Probably involved in the translocation of the substrate across the membrane. The protein is Probable multidrug ABC transporter permease YbhS (ybhS) of Escherichia coli O157:H7.